We begin with the raw amino-acid sequence, 462 residues long: uncharacterized protein (462 aa).

The tract at residues 1 to 108 is disordered; it reads MEDSNTNKDI…NGQDDQDEMD (108 aa). Residues 36-51 show a composition bias toward basic and acidic residues; that stretch reads TVERILERKQKERESK. The segment covering 64–95 has biased composition (low complexity); it reads SSPSSLLSSPISSNDNNNNNNNNNNESFDINN. Residues 119 to 150 are a coiled coil; that stretch reads LLKRKAALAAKKKESLAEQMKKYNQQYDSIIS. The tract at residues 188–208 is disordered; the sequence is SKLQSLNNNTSPSTSSSNLID. Residues 190–208 are compositionally biased toward low complexity; sequence LQSLNNNTSPSTSSSNLID.

This is an uncharacterized protein from Dictyostelium discoideum (Social amoeba).